A 124-amino-acid chain; its full sequence is Fluoride-specific ion channel FluC (124 aa).

Helical transmembrane passes span 4–24 (IVAI…LAGW), 32–52 (GFPY…GLIM), 67–87 (IGLT…SYET), and 96–116 (FITA…CTWL). Residues Gly75 and Thr78 each contribute to the Na(+) site.

It belongs to the fluoride channel Fluc/FEX (TC 1.A.43) family.

It localises to the cell inner membrane. The enzyme catalyses fluoride(in) = fluoride(out). Its activity is regulated as follows. Na(+) is not transported, but it plays an essential structural role and its presence is essential for fluoride channel function. In terms of biological role, fluoride-specific ion channel. Important for reducing fluoride concentration in the cell, thus reducing its toxicity. The polypeptide is Fluoride-specific ion channel FluC (Geobacter metallireducens (strain ATCC 53774 / DSM 7210 / GS-15)).